We begin with the raw amino-acid sequence, 352 residues long: Neutral protease 2 homolog ATEG_04941 (352 aa).

Positions 1-19 are cleaved as a signal peptide; it reads MRFTALATAILPLACNVLA. The propeptide occupies 20 to 175; the sequence is LPAKTGEAPK…ASAVKPLDKR (156 aa). Cystine bridges form between Cys181–Cys253 and Cys260–Cys278. Zn(2+) is bound at residue His303. Glu304 is a catalytic residue. Zn(2+) is bound by residues His307 and Asp318.

This sequence belongs to the peptidase M35 family. Requires Zn(2+) as cofactor.

It localises to the secreted. The enzyme catalyses Preferential cleavage of bonds with hydrophobic residues in P1'. Also 3-Asn-|-Gln-4 and 8-Gly-|-Ser-9 bonds in insulin B chain.. Functionally, secreted metalloproteinase that allows assimilation of proteinaceous substrates. Shows high activities on basic nuclear substrates such as histone and protamine. This chain is Neutral protease 2 homolog ATEG_04941, found in Aspergillus terreus (strain NIH 2624 / FGSC A1156).